The primary structure comprises 542 residues: TNF receptor-associated factor 6 (542 aa).

The segment at 1-374 (MSLLHCENSC…EAQQCNGIYI (374 aa)) is interaction with TAX1BP1. The segment at 71-110 (CPICLMALREAVQTPCGHRFCKACIIKSIRDAGHKCPVDN) adopts an RING-type; degenerate zinc-finger fold. A Glycyl lysine isopeptide (Lys-Gly) (interchain with G-Cter in SUMO); alternate cross-link involves residue K125. A Glycyl lysine isopeptide (Lys-Gly) (interchain with G-Cter in ubiquitin); alternate cross-link involves residue K125. K143 participates in a covalent cross-link: Glycyl lysine isopeptide (Lys-Gly) (interchain with G-Cter in SUMO). 2 consecutive TRAF-type zinc fingers follow at residues 151–203 (EHQA…EDKE) and 204–260 (IHEQ…NHLA). Residues 310–368 (SEVHNFQETIQQLEGRLVRQDHQIRELTAKMETQSMYVNELKRTIRTLEDKVAEIEAQQ) adopt a coiled-coil conformation. Residue K339 forms a Glycyl lysine isopeptide (Lys-Gly) (interchain with G-Cter in ubiquitin) linkage. The 150-residue stretch at 370-519 (NGIYIWKIGN…DDTLLVRCEV (150 aa)) folds into the MATH domain. Positions 375–542 (WKIGNFGMHL…FQPRSTDSGI (168 aa)) are interaction with TANK. A Glycyl lysine isopeptide (Lys-Gly) (interchain with G-Cter in SUMO) cross-link involves residue K473.

It belongs to the TNF receptor-associated factor family. A subfamily. Homotrimer. Homooligomer. N-terminal region is dimeric while C-terminal region is trimeric; maybe providing a mode of oligomerization. Upon IL1B treatment, forms a complex with PELI1, IRAK1, IRAK4 and MYD88; this complex recruits MAP3K7/TAK1, TAB1 and TAB2 to mediate NF-kappa-B activation. Direct binding of SMAD6 to PELI1 prevents the complex formation and hence negatively regulates IL1R-TLR signaling and eventually NF-kappa-B-mediated gene expression. Binds to TNFRSF5/CD40 and TNFRSF11A/RANK. Associates with NGFR, TNFRSF17, IRAK2, IRAK3, RIPK2, MAP3K1, MAP3K5, MAP3K14, CSK, TRAF, TRAF-interacting protein TRIP and TNF receptor associated protein TDP2. Interacts with IL17R. Interacts with SQSTM1 bridging NTRK1 and NGFR. Forms a ternary complex with SQSTM1 and PRKCZ. Interacts with PELI2 and PELI3. Binds UBE2V1. Interacts with TAX1BP1; this interaction mediates deubiquitination of TRAF6 and inhibition of NF-kappa-B activation. Interacts with ZNF675. Interacts with ARRB1 and ARRB2. Interacts with MAP3K7 and TAB1/MAP3K7IP1; during IL-1 signaling. Interacts with UBE2N. Interacts with TGFBR1, HDAC1 and RANGAP1. Interacts with AKT1, AKT2 and AKT3. Interacts (via TRAF domains) with NUMBL (via C-terminal). Interacts with RBCK1. Interacts with LIMD1 (via LIM domains). Interacts with RSAD2/viperin. Interacts (via C-terminus) with EIF2AK2/PKR (via the kinase catalytic domain). Interacts with ZFAND5. Interacts with IL1RL1. Interacts with TRAFD1. Interacts with AJUBA. Interacts with MAVS/IPS1. Interacts (via TRAF domains) with DYNC2I2 (via WD domains). Interacts with IFIT3 (via N-terminus). Interacts with TICAM2. Interacts with CARD14. Interacts with CD40 and MAP3K8; the interaction is required for ERK activation. Interacts with TICAM1 and this interaction is enhanced in the presence of WDFY1. Interacts with TANK; this interaction increases in response to DNA damage. Interacts with USP10; this interaction increases in response to DNA damage. Interacts with ZC3H12A; this interaction increases in response to DNA damage and is stimulated by TANK. Interacts with WDFY3. Interacts with TRIM13. Interacts with GPS2. Interacts (via C-terminus) with SASH1. Interacts with LRRC19. Interacts with IL17RA and TRAF3IP2. Interacts with TOMM70. Interacts with AMBRA1; interaction is required to mediate 'Lys-63'-linked ubiquitination of ULK1. Interacts with CRBN; this interaction inhibits TLR4-mediated signaling by preventing TRAF6-mediated ubiquitination of ECSIT. Sumoylated on Lys-125, Lys-143 and Lys-473 with SUMO1. In terms of processing, polyubiquitinated on Lys-125 by TRAF3IP2; after cell stimulation with IL17A. Polyubiquitinated on Lys-125; after cell stimulation with IL1B or TGFB. This ligand-induced cell stimulation leads to dimerization/oligomerization of TRAF6 molecules, followed by auto-ubiquitination which involves UBE2N and UBE2V1 and leads to TRAF6 activation. This 'Lys-63' site-specific poly-ubiquitination appears to be associated with the activation of signaling molecules. Endogenous autoubiquitination occurs only for the cytoplasmic form. Deubiquitinated by USP10 in a TANK-dependent manner, leading to the negative regulation of NF-kappa-B signaling upon DNA damage. LRRC19 induces 'Lys-63' ubiquitination. Ubiquitinated at Lys-339 by the SCF(FBXL2) complex, leading to its degradation by the proteasome.

It is found in the cytoplasm. The protein resides in the cell cortex. Its subcellular location is the nucleus. The protein localises to the lipid droplet. It catalyses the reaction S-ubiquitinyl-[E2 ubiquitin-conjugating enzyme]-L-cysteine + [acceptor protein]-L-lysine = [E2 ubiquitin-conjugating enzyme]-L-cysteine + N(6)-ubiquitinyl-[acceptor protein]-L-lysine.. It functions in the pathway protein modification; protein ubiquitination. Its function is as follows. E3 ubiquitin ligase that, together with UBE2N and UBE2V1, mediates the synthesis of 'Lys-63'-linked-polyubiquitin chains conjugated to proteins, such as ECSIT, IKBKG, IRAK1, AKT1 and AKT2. Also mediates ubiquitination of free/unanchored polyubiquitin chain that leads to MAP3K7 activation. Leads to the activation of NF-kappa-B and JUN. Seems to also play a role in dendritic cells (DCs) maturation and/or activation. Represses c-Myb-mediated transactivation, in B-lymphocytes. Adapter protein that seems to play a role in signal transduction initiated via TNF receptor, IL-1 receptor and IL-17 receptor. Regulates osteoclast differentiation by mediating the activation of adapter protein complex 1 (AP-1) and NF-kappa-B, in response to RANK-L stimulation. Together with MAP3K8, mediates CD40 signals that activate ERK in B-cells and macrophages, and thus may play a role in the regulation of immunoglobulin production. Acts as a regulator of the JNK and NF-kappa-B signaling pathways by initiating assembly of heterotypic 'Lys-63'-/'Lys-48'-linked branched ubiquitin chains that are then recognized by TAB2: TRAF6 catalyzes initial 'Lys-63'-linked-polyubiquitin chains that are then branched via 'Lys-48'-linked polyubiquitin by HUWE1. 'Lys-63'-/'Lys-48'-linked branched ubiquitin chains protect 'Lys-63'-linkages from CYLD deubiquitination. Also participates in the TCR signaling by ubiquitinating LAT. In Bos taurus (Bovine), this protein is TNF receptor-associated factor 6 (TRAF6).